The sequence spans 509 residues: MDIRAAEISAILKDQIKNFGQEAEVSEVGQVLSVGDGIARVYGLDNVQAGEMVEFPGGIRGMALNLEADNVGVVIFGSDRDIKEGDTVKRTGAIVDVPVGPELLGRVVDALGNPIDGKGPINAKQRARVDVKAPGIIPRKSVHEPMSTGLKAIDALIPVGRGQRELVIGDRQTGKTAIILDTILNQKAIHDNGPEGDKLYCVYVAIGQKRSTVAQFVKVLEERGALQYSIIVAATASDPAPMQYLAPFAGCAMGEYFRDNGKHALIGYDDLSKQAVAYRQMSLLLRRPPGREAYPGDVFYLHSRLLERAAKLSDERGAGSLTALPVIETQGNDVSAFIPTNVISITDGQIFLETDLFYQGIRPAVNVGLSVSRVGSSAQIKAMKQVAGSIKGELAQYREMAAFAQFGSDLDAATQRLLNRGARLTELLKQPQFSPLKTEEQVAVIFAGVNGYLDKLPVSDVGKFEHGLLSYLRSEGKAVLDTIRTEKAISDDTKAKLKGAIDSFAKSFA.

169-176 is a binding site for ATP; it reads GDRQTGKT.

It belongs to the ATPase alpha/beta chains family. In terms of assembly, F-type ATPases have 2 components, CF(1) - the catalytic core - and CF(0) - the membrane proton channel. CF(1) has five subunits: alpha(3), beta(3), gamma(1), delta(1), epsilon(1). CF(0) has three main subunits: a(1), b(2) and c(9-12). The alpha and beta chains form an alternating ring which encloses part of the gamma chain. CF(1) is attached to CF(0) by a central stalk formed by the gamma and epsilon chains, while a peripheral stalk is formed by the delta and b chains.

Its subcellular location is the cell inner membrane. The enzyme catalyses ATP + H2O + 4 H(+)(in) = ADP + phosphate + 5 H(+)(out). Functionally, produces ATP from ADP in the presence of a proton gradient across the membrane. The alpha chain is a regulatory subunit. The chain is ATP synthase subunit alpha from Rhizobium meliloti (strain 1021) (Ensifer meliloti).